We begin with the raw amino-acid sequence, 632 residues long: Signal-transduction and transcriptional-control protein (632 aa).

The PAS domain maps to 197 to 270 (TYQYLNKITD…GQSYEDEEIM (74 aa)). Residues 324-554 (IIGQSEAMKR…LENCIENIVN (231 aa)) enclose the Sigma-54 factor interaction domain. ATP is bound by residues 352-359 (GESGTGKE) and 416-425 (ANEGTLFLDE). The segment at residues 606 to 625 (ISKACRILGINRSTLYIKIK) is a DNA-binding region (H-T-H motif).

This is Signal-transduction and transcriptional-control protein (stc) from Clostridium beijerinckii (Clostridium MP).